Consider the following 213-residue polypeptide: ATP phosphoribosyltransferase (213 aa).

Belongs to the ATP phosphoribosyltransferase family. Short subfamily. As to quaternary structure, heteromultimer composed of HisG and HisZ subunits.

The protein resides in the cytoplasm. The catalysed reaction is 1-(5-phospho-beta-D-ribosyl)-ATP + diphosphate = 5-phospho-alpha-D-ribose 1-diphosphate + ATP. Its pathway is amino-acid biosynthesis; L-histidine biosynthesis; L-histidine from 5-phospho-alpha-D-ribose 1-diphosphate: step 1/9. Its function is as follows. Catalyzes the condensation of ATP and 5-phosphoribose 1-diphosphate to form N'-(5'-phosphoribosyl)-ATP (PR-ATP). Has a crucial role in the pathway because the rate of histidine biosynthesis seems to be controlled primarily by regulation of HisG enzymatic activity. The sequence is that of ATP phosphoribosyltransferase from Methylococcus capsulatus (strain ATCC 33009 / NCIMB 11132 / Bath).